Consider the following 156-residue polypeptide: Probable chemoreceptor glutamine deamidase CheD (156 aa).

Belongs to the CheD family.

The enzyme catalyses L-glutaminyl-[protein] + H2O = L-glutamyl-[protein] + NH4(+). In terms of biological role, probably deamidates glutamine residues to glutamate on methyl-accepting chemotaxis receptors (MCPs), playing an important role in chemotaxis. In Bdellovibrio bacteriovorus (strain ATCC 15356 / DSM 50701 / NCIMB 9529 / HD100), this protein is Probable chemoreceptor glutamine deamidase CheD.